The following is a 140-amino-acid chain: Sex-regulated protein janus-B (140 aa).

Substrate is bound at residue Arg-42. Catalysis depends on His-69, which acts as the Proton acceptor. 110-112 (CKT) provides a ligand contact to substrate.

Belongs to the janus family.

In terms of biological role, janA and janB regulate somatic sex differentiation. The sequence is that of Sex-regulated protein janus-B (janB) from Drosophila pseudoobscura pseudoobscura (Fruit fly).